A 271-amino-acid chain; its full sequence is Putative pirin-like protein At3g59260 (271 aa).

The protein belongs to the pirin family.

The protein localises to the nucleus. The polypeptide is Putative pirin-like protein At3g59260 (Arabidopsis thaliana (Mouse-ear cress)).